A 546-amino-acid chain; its full sequence is Chaperonin GroEL (546 aa).

Residues 29-32 (TMGP), Lys50, 86-90 (DGTTT), Gly414, and Asp492 contribute to the ATP site.

Belongs to the chaperonin (HSP60) family. Forms a cylinder of 14 subunits composed of two heptameric rings stacked back-to-back. Interacts with the co-chaperonin GroES.

It is found in the cytoplasm. It carries out the reaction ATP + H2O + a folded polypeptide = ADP + phosphate + an unfolded polypeptide.. Functionally, together with its co-chaperonin GroES, plays an essential role in assisting protein folding. The GroEL-GroES system forms a nano-cage that allows encapsulation of the non-native substrate proteins and provides a physical environment optimized to promote and accelerate protein folding. The sequence is that of Chaperonin GroEL from Helicobacter acinonychis (strain Sheeba).